We begin with the raw amino-acid sequence, 364 residues long: WAT1-related protein At5g47470 (364 aa).

10 helical membrane passes run 28-48 (MVIV…SLLM), 59-79 (FTIV…FAIL), 93-113 (LIGK…SLFL), 124-144 (ATAM…IVGL), 158-178 (ILGT…HSTS), 197-217 (VVGC…VVLQ), 228-248 (ISLS…VLLL), 255-275 (VLAS…LAGA), 293-313 (PVFV…FAVL), and 319-339 (VSLG…LVLW). In terms of domain architecture, EamA 1 spans 40–172 (VYAGNSLLMS…LCVFGALAMS (133 aa)). Residues 219–338 (STLAEFPAPI…LMFVGLYLVL (120 aa)) form the EamA 2 domain.

This sequence belongs to the drug/metabolite transporter (DMT) superfamily. Plant drug/metabolite exporter (P-DME) (TC 2.A.7.4) family.

It is found in the membrane. The chain is WAT1-related protein At5g47470 from Arabidopsis thaliana (Mouse-ear cress).